The following is a 156-amino-acid chain: Aspartate carbamoyltransferase regulatory chain (156 aa).

Residues Cys110, Cys115, Cys140, and Cys143 each contribute to the Zn(2+) site.

The protein belongs to the PyrI family. Contains catalytic and regulatory chains. Requires Zn(2+) as cofactor.

Its function is as follows. Involved in allosteric regulation of aspartate carbamoyltransferase. This is Aspartate carbamoyltransferase regulatory chain from Methanocella arvoryzae (strain DSM 22066 / NBRC 105507 / MRE50).